Reading from the N-terminus, the 329-residue chain is Serpentine receptor class alpha-7 (329 aa).

7 consecutive transmembrane segments (helical) span residues 25–45, 57–77, 104–124, 143–163, 187–207, 237–257, and 273–293; these read YVYLSLISLTFIFSYFAVKIV, ILLFHNLVSANLHQLLYLFSA, YLKVLVTGISGMIYGQTGLLL, VGIAISIAILFLSLITGKIII, RLFASIYTFISSFNLVFSVLL, TICFLTFVQFIFMFIYSFGIF, and FIVVWFYTIPFIAALFPILLV.

It belongs to the nematode receptor-like protein sra family.

It localises to the membrane. The chain is Serpentine receptor class alpha-7 (sra-7) from Caenorhabditis elegans.